A 337-amino-acid chain; its full sequence is MLMATDAIGSDAVHIPVMRARILDLLAVVLKSGRRVHVDGTLGMGGHAEAVLRRFPDVELVGIDRDQQALTMAEARLEPFADRVHLVHAVHDELPEVLDDLGLDYVDSVLLDLGLSSFQIDEVERGFSYSVDSPLDMRMDQSSGRTAAQILNESDPGALVRMLREYGEEKFADRIVRAIVTERDRQPIETSGRLVEIITEAIPATVRRKRHSHPAKRTFQALRIAVNREMETLPAVLPRALDRLDVGGRIAVLSYHSLEDRPVKEAFRDACADTAPAGLPMVPESMAAKFNPVTRGAERPDADEVATNPRSASARLRVIERVRPGPVNRQHATKESR.

S-adenosyl-L-methionine-binding positions include Gly-45 to His-47, Asp-64, His-91, Asp-112, and Gln-119.

This sequence belongs to the methyltransferase superfamily. RsmH family.

It localises to the cytoplasm. It carries out the reaction cytidine(1402) in 16S rRNA + S-adenosyl-L-methionine = N(4)-methylcytidine(1402) in 16S rRNA + S-adenosyl-L-homocysteine + H(+). In terms of biological role, specifically methylates the N4 position of cytidine in position 1402 (C1402) of 16S rRNA. The sequence is that of Ribosomal RNA small subunit methyltransferase H from Cutibacterium acnes (strain DSM 16379 / KPA171202) (Propionibacterium acnes).